The chain runs to 487 residues: DNA-dependent metalloprotease SPRTN (487 aa).

N-acetylmethionine is present on Met1. Residues 45 to 212 form the SprT-like domain; the sequence is LQGLFVLFND…KTCGGTYIKI (168 aa). Residue His111 coordinates Zn(2+). Glu112 is a catalytic residue. 2 residues coordinate Zn(2+): His115 and His130. Residues 219 to 248 form a disordered region; that stretch reads SKKGKGKTKLRKQPVSEAENKDKPNRGEKQ. Over residues 220–230 the composition is skewed to basic residues; the sequence is KKGKGKTKLRK. Lys230 carries the post-translational modification N6-acetyllysine. A compositionally biased stretch (basic and acidic residues) spans 236–247; that stretch reads AENKDKPNRGEK. Positions 253 to 261 match the SHP-box motif; that stretch reads FTGKGYVLG. At Ser267 the chain carries Phosphoserine. Residues 280-289 show a composition bias toward polar residues; it reads SQEPLSQDHS. The disordered stretch occupies residues 280–317; it reads SQEPLSQDHSANALRPHSKTEVKFEQNGPSKKTSVASP. Residue Lys302 forms a Glycyl lysine isopeptide (Lys-Gly) (interchain with G-Cter in SUMO2) linkage. A compositionally biased stretch (polar residues) spans 306-317; it reads NGPSKKTSVASP. The short motif at 324-331 is the PIP-box element; the sequence is QNVLSNYF. Lys340 participates in a covalent cross-link: Glycyl lysine isopeptide (Lys-Gly) (interchain with G-Cter in SUMO2); alternate. Lys340 participates in a covalent cross-link: Glycyl lysine isopeptide (Lys-Gly) (interchain with G-Cter in ubiquitin); alternate. The interval 347 to 379 is disordered; sequence GSPVKSLTVGDSTTKSVSAGSQRRVTSSRTSLR. Ser373 carries the post-translational modification Phosphoserine. The Nuclear localization signal motif lies at 401-412; it reads GKLPSKRPRIED. Lys413 participates in a covalent cross-link: Glycyl lysine isopeptide (Lys-Gly) (interchain with G-Cter in ubiquitin). Residues Lys422 and Lys423 each participate in a glycyl lysine isopeptide (Lys-Gly) (interchain with G-Cter in SUMO2) cross-link. The segment at 427 to 455 is disordered; the sequence is QSGGGDVTSSSHPPAAAQSPSGASGQSRV. The segment covering 435-453 has biased composition (low complexity); sequence SSSHPPAAAQSPSGASGQS. Residues 455-482 form a UBZ4-type zinc finger; it reads VVHCPVCQDEVSETQINEHLDWCLERDS. 4 residues coordinate Zn(2+): Cys458, Cys461, His473, and Cys477. A Glycyl lysine isopeptide (Lys-Gly) (interchain with G-Cter in SUMO2) cross-link involves residue Lys486.

This sequence belongs to the Spartan family. Homodimer. Interacts (VIA PIP-box) with PCNA (when ubiquitinated). Interacts (via its SHP-box) with VCP/p97. Interacts with RAD18. Interacts with KCTD13 and POLD3. Zn(2+) serves as cofactor. Post-translationally, autocatalytically cleaved in response to double-stranded DNA-binding: autocatalytic cleavage takes place in trans and leads to inactivation. Monoubiquitinated; monoubiquitination promotes exclusion from chromatin. Deubiquitinated by VCPIP1: deubiquitination is required for subsequent acetylation and recruitment to chromatin and DNA damage sites. In terms of processing, acetylated following deubiquitination by VCPIP1, leading to recruitment to chromatin and DNA damage sites. Post-translationally, phosphorylation by CHEK1 promotes recruitment to chromatin.

Its subcellular location is the nucleus. It is found in the chromosome. With respect to regulation, DNA-binding activates the protease activity: single-stranded DNA-binding specifically activates ability to cleave covalent DNA-protein cross-links (DPCs). In contrast, double-stranded DNA-binding specifically activates autocatalytic cleavage, and subsequent inactivation. Functionally, DNA-dependent metalloendopeptidase that mediates the proteolytic cleavage of covalent DNA-protein cross-links (DPCs) during DNA synthesis, thereby playing a key role in maintaining genomic integrity. DPCs are highly toxic DNA lesions that interfere with essential chromatin transactions, such as replication and transcription, and which are induced by reactive agents, such as UV light or formaldehyde. Associates with the DNA replication machinery and specifically removes DPCs during DNA synthesis. Catalyzes proteolytic cleavage of the HMCES DNA-protein cross-link following unfolding by the BRIP1/FANCJ helicase. Acts as a pleiotropic protease for DNA-binding proteins cross-linked with DNA, such as TOP1, TOP2A, histones H3 and H4. Mediates degradation of DPCs that are not ubiquitinated, while it is not able to degrade ubiquitinated DPCs. SPRTN activation requires polymerase collision with DPCs followed by helicase bypass of DPCs. Involved in recruitment of VCP/p97 to sites of DNA damage. Also acts as an activator of CHEK1 during normal DNA replication by mediating proteolytic cleavage of CHEK1, thereby promoting CHEK1 removal from chromatin and subsequent activation. Does not activate CHEK1 in response to DNA damage. May also act as a 'reader' of ubiquitinated PCNA: recruited to sites of UV damage and interacts with ubiquitinated PCNA and RAD18, the E3 ubiquitin ligase that monoubiquitinates PCNA. Facilitates chromatin association of RAD18 and is required for efficient PCNA monoubiquitination, promoting a feed-forward loop to enhance PCNA ubiquitination and translesion DNA synthesis. The protein is DNA-dependent metalloprotease SPRTN of Bos taurus (Bovine).